Consider the following 487-residue polypeptide: Probable cobyric acid synthase (487 aa).

The 186-residue stretch at 246 to 431 (LVRIAVIRLP…LHGLFMVPAA (186 aa)) folds into the GATase cobBQ-type domain. Cysteine 325 acts as the Nucleophile in catalysis. The active site involves histidine 423.

It belongs to the CobB/CobQ family. CobQ subfamily.

Its pathway is cofactor biosynthesis; adenosylcobalamin biosynthesis. Its function is as follows. Catalyzes amidations at positions B, D, E, and G on adenosylcobyrinic A,C-diamide. NH(2) groups are provided by glutamine, and one molecule of ATP is hydrogenolyzed for each amidation. This chain is Probable cobyric acid synthase, found in Methanosphaerula palustris (strain ATCC BAA-1556 / DSM 19958 / E1-9c).